Here is a 554-residue protein sequence, read N- to C-terminus: Hydroxylamine reductase (554 aa).

Residues Cys-3, Cys-6, Cys-18, and Cys-25 each coordinate [2Fe-2S] cluster. 8 residues coordinate hybrid [4Fe-2O-2S] cluster: His-252, Glu-276, Cys-320, Cys-408, Cys-436, Cys-461, Glu-495, and Lys-497. Cys-408 bears the Cysteine persulfide mark.

It belongs to the HCP family. [2Fe-2S] cluster serves as cofactor. It depends on hybrid [4Fe-2O-2S] cluster as a cofactor.

The protein localises to the cytoplasm. It carries out the reaction A + NH4(+) + H2O = hydroxylamine + AH2 + H(+). Its function is as follows. Catalyzes the reduction of hydroxylamine to form NH(3) and H(2)O. The sequence is that of Hydroxylamine reductase from Shewanella oneidensis (strain ATCC 700550 / JCM 31522 / CIP 106686 / LMG 19005 / NCIMB 14063 / MR-1).